Consider the following 207-residue polypeptide: Large ribosomal subunit protein uL3 (207 aa).

A disordered region spans residues Gly126–Gly149.

The protein belongs to the universal ribosomal protein uL3 family. Part of the 50S ribosomal subunit. Forms a cluster with proteins L14 and L19.

One of the primary rRNA binding proteins, it binds directly near the 3'-end of the 23S rRNA, where it nucleates assembly of the 50S subunit. The chain is Large ribosomal subunit protein uL3 from Deinococcus geothermalis (strain DSM 11300 / CIP 105573 / AG-3a).